We begin with the raw amino-acid sequence, 457 residues long: MITREFDTIAAISTPLGEGAIGIVRLSGTDSFAIAQKIFKGKDLNKVASHTLNYGHIIDPLTGKVMDEVMVGAMKSPKTFTREDIIEINTHGGIAVTNEILQLAIREGARLAEPGEFTKRAFLNGRVDLTQAEAVMDIIRAKTDKAMNIAVKQLDGSLSDLINNIRQEILNTLAQVEVNIDYPEYDDVEEATTAVVREKTMEFEQLLTKLLRTARRGKILREGISTAIIGRPNVGKSSLLNNLLREDKAIVTDIAGTTRDVIEEYVNINGVPLKLIDTAGIRETDDIVEQIGVERSKKALKEADLVLLVLNASEPLTAQDRQLLEISQDTNRIILLNKTDLPETIETSKLPEDVIRISVLKNQNIDKIEERINNLFFENAGLVEQDATYLSNARHISLIEKAVESLQAVNQGLELGMPVDLLQVDLTRTWEILGEITGDAAPDELITQLFSQFCLGK.

Residues R25, E87, and R126 each coordinate (6S)-5-formyl-5,6,7,8-tetrahydrofolate. Residues G223 to F377 enclose the TrmE-type G domain. A K(+)-binding site is contributed by N233. GTP contacts are provided by residues N233–S238, T252–T258, and D277–G280. S237 contacts Mg(2+). Positions 252, 254, and 257 each coordinate K(+). Residue T258 participates in Mg(2+) binding. K457 is a binding site for (6S)-5-formyl-5,6,7,8-tetrahydrofolate.

It belongs to the TRAFAC class TrmE-Era-EngA-EngB-Septin-like GTPase superfamily. TrmE GTPase family. Homodimer. Heterotetramer of two MnmE and two MnmG subunits. K(+) serves as cofactor.

Its subcellular location is the cytoplasm. Its function is as follows. Exhibits a very high intrinsic GTPase hydrolysis rate. Involved in the addition of a carboxymethylaminomethyl (cmnm) group at the wobble position (U34) of certain tRNAs, forming tRNA-cmnm(5)s(2)U34. The sequence is that of tRNA modification GTPase MnmE from Streptococcus pneumoniae (strain Hungary19A-6).